The primary structure comprises 431 residues: Glutamyl-tRNA(Gln) amidotransferase subunit A (431 aa).

Active-site charge relay system residues include lysine 37 and serine 112. Serine 136 (acyl-ester intermediate) is an active-site residue.

It belongs to the amidase family. GatA subfamily. Heterotrimer of A, B and C subunits.

The catalysed reaction is L-glutamyl-tRNA(Gln) + L-glutamine + ATP + H2O = L-glutaminyl-tRNA(Gln) + L-glutamate + ADP + phosphate + H(+). Functionally, allows the formation of correctly charged Gln-tRNA(Gln) through the transamidation of misacylated Glu-tRNA(Gln) in organisms which lack glutaminyl-tRNA synthetase. The reaction takes place in the presence of glutamine and ATP through an activated gamma-phospho-Glu-tRNA(Gln). In Methanospirillum hungatei JF-1 (strain ATCC 27890 / DSM 864 / NBRC 100397 / JF-1), this protein is Glutamyl-tRNA(Gln) amidotransferase subunit A.